The primary structure comprises 759 residues: Probable Na(+)/H(+) antiporter C3A11.09 (759 aa).

11 consecutive transmembrane segments (helical) span residues 12-32, 36-56, 105-125, 133-153, 172-192, 206-226, 244-264, 295-315, 319-339, 361-381, and 415-435; these read HLAY…SLII, LFLG…PYVA, MLLP…YALI, SLAI…SIVG, ESGC…YLII, IIIL…GVIA, FLVF…IIGV, VIDL…MPWP, MPHM…ILIA, ALFA…CLVA, and VVCF…AFFM. At Thr-442 the chain carries Phosphothreonine. Ser-446 is subject to Phosphoserine. At Thr-448 the chain carries Phosphothreonine. 5 stretches are compositionally biased toward basic and acidic residues: residues 514-529, 537-547, 590-601, 622-647, and 655-671; these read LREE…HYDA, YESRQPRRSNE, IDEKLAQGDPKA, NLHE…ENHR, and SESH…RREQ. Disordered regions lie at residues 514–558, 578–606, and 622–759; these read LREE…NPGD, SHTS…SFGR, and NLHE…RAWE. The span at 696 to 713 shows a compositional bias: polar residues; sequence NENNESSSDTRNGLLSDN. 2 N-linked (GlcNAc...) asparagine glycosylation sites follow: Asn-699 and Asn-713. A compositionally biased stretch (low complexity) spans 724–733; that stretch reads RAPSAAVSSE. At Ser-735 the chain carries Phosphoserine.

This sequence belongs to the fungal Na(+)/H(+) exchanger family.

The protein localises to the membrane. Its function is as follows. Sodium export from cell, takes up external protons in exchange for internal sodium ions. In Schizosaccharomyces pombe (strain 972 / ATCC 24843) (Fission yeast), this protein is Probable Na(+)/H(+) antiporter C3A11.09 (sod22).